A 338-amino-acid chain; its full sequence is Arginine N-succinyltransferase subunit alpha (338 aa).

This sequence belongs to the succinylarginine dihydrolase family. Heterotetramer of two alpha and two beta subunits.

The enzyme catalyses succinyl-CoA + L-arginine = N(2)-succinyl-L-arginine + CoA + H(+). It participates in amino-acid degradation; L-arginine degradation via AST pathway; L-glutamate and succinate from L-arginine: step 1/5. Catalyzes the transfer of succinyl-CoA to arginine to produce N(2)-succinylarginine. Also acts on L-ornithine. The sequence is that of Arginine N-succinyltransferase subunit alpha (astA) from Pseudomonas aeruginosa (strain ATCC 15692 / DSM 22644 / CIP 104116 / JCM 14847 / LMG 12228 / 1C / PRS 101 / PAO1).